The following is a 289-amino-acid chain: Acetyl-coenzyme A carboxylase carboxyl transferase subunit beta (289 aa).

Residues 34-289 (MWVKCNKCGE…KLINMHQNSF (256 aa)) enclose the CoA carboxyltransferase N-terminal domain. Positions 38, 41, 57, and 60 each coordinate Zn(2+). The C4-type zinc-finger motif lies at 38-60 (CNKCGEILYQNDLEKNYMVCNLC).

It belongs to the AccD/PCCB family. Acetyl-CoA carboxylase is a heterohexamer composed of biotin carboxyl carrier protein (AccB), biotin carboxylase (AccC) and two subunits each of ACCase subunit alpha (AccA) and ACCase subunit beta (AccD). Requires Zn(2+) as cofactor.

The protein localises to the cytoplasm. It catalyses the reaction N(6)-carboxybiotinyl-L-lysyl-[protein] + acetyl-CoA = N(6)-biotinyl-L-lysyl-[protein] + malonyl-CoA. The protein operates within lipid metabolism; malonyl-CoA biosynthesis; malonyl-CoA from acetyl-CoA: step 1/1. In terms of biological role, component of the acetyl coenzyme A carboxylase (ACC) complex. Biotin carboxylase (BC) catalyzes the carboxylation of biotin on its carrier protein (BCCP) and then the CO(2) group is transferred by the transcarboxylase to acetyl-CoA to form malonyl-CoA. This is Acetyl-coenzyme A carboxylase carboxyl transferase subunit beta from Clostridium botulinum (strain ATCC 19397 / Type A).